Reading from the N-terminus, the 667-residue chain is Probable potassium transport system protein Kup (667 aa).

The next 12 helical transmembrane spans lie at 16–36 (GFII…LYTM), 58–78 (VSLI…LIAL), 101–121 (WLII…ALTP), 146–166 (TNVI…QRFG), 167–187 (TGVI…VLGI), 221–241 (IFIL…YSDL), 253–273 (WPFV…WILA), 294–314 (VYLV…LISG), 343–363 (LYIP…VLYF), 373–393 (YGLA…YYLI), 399–419 (PLLA…FFLA), and 431–451 (VVVL…GTVI).

The protein belongs to the HAK/KUP transporter (TC 2.A.72) family.

It is found in the cell membrane. It carries out the reaction K(+)(in) + H(+)(in) = K(+)(out) + H(+)(out). Its function is as follows. Transport of potassium into the cell. Likely operates as a K(+):H(+) symporter. In Streptococcus equi subsp. zooepidemicus (strain MGCS10565), this protein is Probable potassium transport system protein Kup.